The primary structure comprises 463 residues: Competence protein ComFA (463 aa).

Zn(2+) is bound by residues Cys60, Cys63, Cys84, and Cys87. Residues 133–285 (IEAISKKEEL…LNGQLHSVRI (153 aa)) form the Helicase ATP-binding domain. An ATP-binding site is contributed by 146–153 (AVCGAGKT). Residues 233-236 (DEVD) carry the DEAD box motif. The region spanning 317–463 (AVKRWIEFHV…ELAAKVECTD (147 aa)) is the Helicase C-terminal domain.

This sequence belongs to the DEAD box helicase family. In terms of assembly, monomer and dimer in solution. Interacts with DprA and ComFC; ComFA-ComFC form rings about 150 Angstroms in diameter with apparent 6-fold symmetry. It depends on Zn(2+) as a cofactor.

The protein localises to the cytoplasm. Functionally, involved in transformation (genetic competence for DNA uptake). Required for DNA uptake but not for DNA binding to cells. DNA uptake is energy dependent, this protein may provide the driving force for DNA uptake. Does not have helicase activity, translocates on single-stranded (ss)DNA in a 5'-3' direction in an ATP-dependent manner, but does not unwind double-stranded (ds)DNA. ATP hydrolysis causes the release of ssDNA from ComFA. A ssDNA-stimulated ATPase; dsDNA does not stimulate ATPase. ATP hydrolysis causes the release of ssDNA from ComFA. Binds ssDNA but only very poorly to dsDNA in the absence of ATP. Binding to ssDNA does not require free DNA ends. This chain is Competence protein ComFA, found in Bacillus subtilis (strain 168).